Consider the following 226-residue polypeptide: uncharacterized protein (226 aa).

Disordered stretches follow at residues 1-20 and 205-226; these read MGAE…AVQT and LDRK…QRDA.

This is an uncharacterized protein from Treponema pallidum (strain Nichols).